A 158-amino-acid polypeptide reads, in one-letter code: Endoribonuclease YbeY (158 aa).

The Zn(2+) site is built by His-124, His-128, and His-134.

The protein belongs to the endoribonuclease YbeY family. Requires Zn(2+) as cofactor.

The protein localises to the cytoplasm. Functionally, single strand-specific metallo-endoribonuclease involved in late-stage 70S ribosome quality control and in maturation of the 3' terminus of the 16S rRNA. This chain is Endoribonuclease YbeY, found in Caldicellulosiruptor bescii (strain ATCC BAA-1888 / DSM 6725 / KCTC 15123 / Z-1320) (Anaerocellum thermophilum).